The primary structure comprises 65 residues: Small ribosomal subunit protein eS31 (65 aa).

Residues cysteine 36, cysteine 39, cysteine 55, and cysteine 58 each coordinate Zn(2+). A C4-type zinc finger spans residues 36-58 (CPKCGSVMAFHREPVPRWHCGKC).

It belongs to the eukaryotic ribosomal protein eS31 family. As to quaternary structure, part of the 30S ribosomal subunit. It depends on Zn(2+) as a cofactor.

The chain is Small ribosomal subunit protein eS31 from Pyrobaculum calidifontis (strain DSM 21063 / JCM 11548 / VA1).